We begin with the raw amino-acid sequence, 685 residues long: Stromal interaction molecule 1 (685 aa).

Positions 1–22 (MDVCVRLALWLLWGLLLHQGQS) are cleaved as a signal peptide. Residues 23–213 (LSHSHSEKAT…LLTRHNHLKD (191 aa)) lie on the Extracellular side of the membrane. 2 EF-hand domains span residues 64 to 97 (SFEAVRNIHKLMDDDANGDVDVEESDEFLREDLN) and 102 to 126 (TVKHSTFHGEDKLISVEDLWKAWKS). 5 residues coordinate Ca(2+): D76, D78, N80, D82, and E87. Residues N131 and N171 are each glycosylated (N-linked (GlcNAc...) asparagine). Residues 132-200 (WTVDEVVQWL…QLKALDTVLF (69 aa)) enclose the SAM domain. The chain crosses the membrane as a helical span at residues 214 to 234 (FMLVVSIVIGVGGCWFAYIQN). Topologically, residues 235–685 (RYSKEHMKKM…LKIFKKPLKK (451 aa)) are cytoplasmic. Residues 248–442 (LEGLHRAEQS…IEILCGFQIV (195 aa)) adopt a coiled-coil conformation. Phosphoserine is present on S257. An SOAR/CAD region spans residues 344–442 (PEALQKWLQL…IEILCGFQIV (99 aa)). Residues 475–483 (DDVDDMDEE) are contributes to fast Ca(2+)-dependent inactivation of CRAC channels. The span at 490-499 (MQSPSLQSSV) shows a compositional bias: low complexity. A disordered region spans residues 490 to 542 (MQSPSLQSSVRQRLTEPQHGLGSQRDLTHSDSESSLHMSDRQRVAPKPPQMSR). T504 carries the phosphothreonine modification. S512 is subject to Phosphoserine. Over residues 515–532 (DLTHSDSESSLHMSDRQR) the composition is skewed to basic and acidic residues. The residue at position 517 (T517) is a Phosphothreonine. Residues S519, S521, S523, S524, S567, S575, S602, S608, S618, S621, and S628 each carry the phosphoserine modification. A disordered region spans residues 596-685 (LMELSPSAPP…LKIFKKPLKK (90 aa)). Residues 608–620 (SPHLDSSRSHSPS) are compositionally biased toward low complexity. The Microtubule tip localization signal motif lies at 642 to 645 (TRIP). The span at 655–666 (EEDNGSIGEETD) shows a compositional bias: acidic residues. S660 bears the Phosphoserine mark. Residue T665 is modified to Phosphothreonine. A Phosphoserine modification is found at S668. Positions 670-685 (GRKKFPLKIFKKPLKK) are enriched in basic residues. The segment at 672 to 685 (KKFPLKIFKKPLKK) is required for generation of inwardly rectifying CRAC currents.

Monomer in the presence of Ca(2+); it oligomerizes in absence of Ca(2+). Forms homooligomers and heterooligomers with STIM2. Interacts with pore-forming subunits of CRAC channels, ORAI1, ORAI2 and ORAI3; this interaction is potentiated upon Ca(2+) store depletion. Interacts (via the transmembrane region and the SOAR/CAD domain) with SPPL3; the interaction promotes the binding of STIM1 to ORAI1. Interacts (via the SOAR/CAD domain) with ORAI1. Interacts with MAPRE1; probably required for targeting to the growing microtubule plus ends. Interacts with CRACR2A/EFCAB4B; the interaction is direct and takes place in absence of Ca(2+). Forms a complex with CRACR2A/EFCAB4B and ORAI1 at low concentration of Ca(2+), the complex dissociates at elevated Ca(2+) concentrations. Interacts with SARAF, promoting a slow inactivation of STIM1-dependent SOCE activity, possibly by facilitating the deoligomerization of STIM1. Interacts with EFHB; the interaction takes place upon Ca(2+)-store depletion and inhibits the association with SARAF. Interacts with ASPH (isoform 8). Interacts with SLC35G1; intracellular Ca(2+)-dependent. May interact with ATP1A1, ATP2A2, ATP2B1, ATP2B4, KPNB1 and XPO1; through SLC35G1. Interacts with TMEM203. Interacts with STIMATE, promoting STIM1 conformational switch. Interacts with TMEM178A. Interacts with CASQ1 (via C-terminal end and preferentially with the monomeric form); this interaction increases in response to a depletion of intracellular Ca(2+), decreases both STIM1 aggregation and clustering, interaction of STIM1 with ORAI1 and store-operated Ca(2+) entry (SOCE) activity. Interacts with ADCY8. Post-translationally, glycosylation is required for cell surface expression. Phosphorylated predominantly on Ser residues. As to expression, ubiquitously expressed in various human primary cells and tumor cell lines.

The protein localises to the cell membrane. Its subcellular location is the endoplasmic reticulum membrane. The protein resides in the cytoplasm. It localises to the cytoskeleton. It is found in the sarcoplasmic reticulum. Its function is as follows. Acts as a Ca(2+) sensor that gates two major inward rectifying Ca(2+) channels at the plasma membrane: Ca(2+) release-activated Ca(2+) (CRAC) channels and arachidonate-regulated Ca(2+)-selective (ARC) channels. Plays a role in mediating store-operated Ca(2+) entry (SOCE), a Ca(2+) influx following depletion of intracellular Ca(2+) stores. Upon Ca(2+) depletion, translocates from the endoplasmic reticulum to the plasma membrane where it activates CRAC channel pore-forming subunits ORA1, ORA2 and ORAI3 to generate sustained and oscillatory Ca(2+) entry. Involved in enamel formation. The polypeptide is Stromal interaction molecule 1 (STIM1) (Homo sapiens (Human)).